A 108-amino-acid chain; its full sequence is UPF0145 protein Patl_2194 (108 aa).

Belongs to the UPF0145 family.

This is UPF0145 protein Patl_2194 from Pseudoalteromonas atlantica (strain T6c / ATCC BAA-1087).